The sequence spans 409 residues: MAQNFTKLNPQFENIIFEHDDNQMILNFGPQHPSSHGQLRLILELEGEKIIKATPEIGYLHRGCEKLGENMTYNEYMPTTDRLDYTSSTSNNYAYAHAVETLLNLEIPRRAQVIRTILLELNRMISHIFFISVHALDVGAMSVFLYAFKTREYGLDLMEDYCGARLTHNAIRIGGVPLDLPPNWLEGLKKFLGEMRECKKLIQGLLDKNRIWRMRLENVGVVTPKMAQSWGMSGIMLRGSGIAYDIRKEEPYELYKELDFDVPVGNYGDSYDRYCLYMLEIDESIRIIEQLIPMYAKTDTPIMAQNPHYISAPKEDIMTQNYALMQHFVLVAQGMRPPVGEVYAPTESPKGELGFFIHSEGEPYPHRLKIRAPSFYHIGALSDILVGQYLADAVTVIGSTNAVFGEVDR.

This sequence belongs to the complex I 49 kDa subunit family. In terms of assembly, NDH-1 is composed of 14 different subunits. Subunits NuoB, C, D, E, F, and G constitute the peripheral sector of the complex.

The protein resides in the cell inner membrane. The enzyme catalyses a quinone + NADH + 5 H(+)(in) = a quinol + NAD(+) + 4 H(+)(out). Its function is as follows. NDH-1 shuttles electrons from NADH, via FMN and iron-sulfur (Fe-S) centers, to quinones in the respiratory chain. The immediate electron acceptor for the enzyme in this species is believed to be ubiquinone. Couples the redox reaction to proton translocation (for every two electrons transferred, four hydrogen ions are translocated across the cytoplasmic membrane), and thus conserves the redox energy in a proton gradient. The polypeptide is NADH-quinone oxidoreductase subunit D (Helicobacter pylori (strain Shi470)).